We begin with the raw amino-acid sequence, 368 residues long: snRNA-activating protein complex subunit 1 (368 aa).

Positions 1-168 (MGTPPGLQTD…EEFKDPSDRV (168 aa)) are SNAPC3-binding. The interval 164 to 268 (PSDRVMKLIT…AESLAKIKSK (105 aa)) is SNAPC4-binding. 2 disordered regions span residues 224 to 257 (QQWHKDRKNPSLKSKTNDGEEKMEGNSQETERCE) and 275 to 368 (QASK…RRKH). The span at 238-257 (KTNDGEEKMEGNSQETERCE) shows a compositional bias: basic and acidic residues. A phosphoserine mark is found at Ser289 and Ser290.

Part of the SNAPc complex composed of 5 subunits: SNAPC1, SNAPC2, SNAPC3, SNAPC4 and SNAPC5. SNAPC1 interacts with SNAPC3, SNAPC4 and TBP.

Its subcellular location is the nucleus. In terms of biological role, part of the SNAPc complex required for the transcription of both RNA polymerase II and III small-nuclear RNA genes. Binds to the proximal sequence element (PSE), a non-TATA-box basal promoter element common to these 2 types of genes. Recruits TBP and BRF2 to the U6 snRNA TATA box. The polypeptide is snRNA-activating protein complex subunit 1 (SNAPC1) (Homo sapiens (Human)).